The primary structure comprises 387 residues: Acetate kinase (387 aa).

Asn-14 is a binding site for Mg(2+). ATP is bound at residue Lys-21. Arg-80 contacts substrate. The Proton donor/acceptor role is filled by Asp-137. Residues 197–201 (HLGNG), 271–273 (DFR), and 319–323 (GIGEN) contribute to the ATP site. Glu-373 lines the Mg(2+) pocket.

The protein belongs to the acetokinase family. Homodimer. It depends on Mg(2+) as a cofactor. The cofactor is Mn(2+).

It localises to the cytoplasm. It carries out the reaction acetate + ATP = acetyl phosphate + ADP. It participates in metabolic intermediate biosynthesis; acetyl-CoA biosynthesis; acetyl-CoA from acetate: step 1/2. Its function is as follows. Catalyzes the formation of acetyl phosphate from acetate and ATP. Can also catalyze the reverse reaction. The chain is Acetate kinase from Mycobacterium avium (strain 104).